Reading from the N-terminus, the 92-residue chain is Small ribosomal subunit protein uS19c (92 aa).

The protein belongs to the universal ribosomal protein uS19 family.

The protein localises to the plastid. Its subcellular location is the chloroplast. Functionally, protein S19 forms a complex with S13 that binds strongly to the 16S ribosomal RNA. The polypeptide is Small ribosomal subunit protein uS19c (Tupiella akineta (Green alga)).